We begin with the raw amino-acid sequence, 179 residues long: Large ribosomal subunit protein uL5 (179 aa).

The protein belongs to the universal ribosomal protein uL5 family. As to quaternary structure, part of the 50S ribosomal subunit; part of the 5S rRNA/L5/L18/L25 subcomplex. Contacts the 5S rRNA and the P site tRNA. Forms a bridge to the 30S subunit in the 70S ribosome.

This is one of the proteins that bind and probably mediate the attachment of the 5S RNA into the large ribosomal subunit, where it forms part of the central protuberance. In the 70S ribosome it contacts protein S13 of the 30S subunit (bridge B1b), connecting the 2 subunits; this bridge is implicated in subunit movement. Contacts the P site tRNA; the 5S rRNA and some of its associated proteins might help stabilize positioning of ribosome-bound tRNAs. In Francisella tularensis subsp. mediasiatica (strain FSC147), this protein is Large ribosomal subunit protein uL5.